Here is a 307-residue protein sequence, read N- to C-terminus: Cytidine deaminase 7 (307 aa).

2 consecutive CMP/dCMP-type deaminase domains span residues 22–155 and 185–307; these read TEPI…FTPD and SDCS…FITE. 63–65 is a substrate binding site; that stretch reads NVE. Histidine 76 serves as a coordination point for Zn(2+). Catalysis depends on glutamate 78, which acts as the Proton donor. Residues cysteine 111 and cysteine 114 each coordinate Zn(2+).

Belongs to the cytidine and deoxycytidylate deaminase family. As to quaternary structure, homodimer. Requires Zn(2+) as cofactor.

It catalyses the reaction cytidine + H2O + H(+) = uridine + NH4(+). It carries out the reaction 2'-deoxycytidine + H2O + H(+) = 2'-deoxyuridine + NH4(+). This enzyme scavenges exogenous and endogenous cytidine and 2'-deoxycytidine for UMP synthesis. The protein is Cytidine deaminase 7 (CDA7) of Arabidopsis thaliana (Mouse-ear cress).